The sequence spans 524 residues: MVPPRLHRGAGRPGGLSSLPPFGLGSARFAGIAFEDLREALATRLQMVYVFIMNRVNSQSSGFSQRRRMALGIVILLLVDVIWVASSELTSYVFTQYNKPFFSTFAKTSMFVLYLLGFIIWKPWRQQCTRGFRGKPAAFFADAEGYFAACTTDTSMSSSLSEPLYVPVKFHDLPSEKLESTNIGTEKTPKKSRVRFSNIMEIRQLPSSHALEAKLSRMSYPTVKDQESILKTVGKLTATQVAKISFFFCFVWFLANLSYQEALSDTQVAIVNILSSTSGLFTLILAAVFPSNSGDRFTLSKLLAVILSIGGVVLVNLSGSEKSAGRDTIGSIWSLAGAMFYAVYIVMIKRKVDREDKLDIPMFFGFVGLFNLLLLWPGFFLLHYTGFEDFEFPNKVVLLCIIINGLIGTVLSEFLWLWGCFLTSSLIGTLALSLTIPLSIIADMCMQKVQFSWLFFAGAIPVFFSFFIVTLLCHYNNWDPVMVGVRRVFAFICRKHRIQRVPEDSEQCESLISMHSVSQEDGAT.

2 helical membrane-spanning segments follow: residues 69–89 (MALG…SSEL) and 101–121 (FFST…FIIW). Ser207 is subject to Phosphoserine. 8 consecutive transmembrane segments (helical) span residues 244-264 (ISFF…EALS), 269-289 (AIVN…AAVF), 297-317 (FTLS…LVNL), 328-348 (TIGS…IVMI), 362-382 (MFFG…FFLL), 396-416 (VVLL…EFLW), 421-441 (FLTS…LSII), and 453-473 (WLFF…TLLC). Positions 253 to 317 (FLANLSYQEA…SIGGVVLVNL (65 aa)) constitute an EamA domain.

It belongs to the SLC35F solute transporter family.

The protein localises to the membrane. Functionally, putative solute transporter. The sequence is that of Solute carrier family 35 member F5 (Slc35f5) from Mus musculus (Mouse).